The following is a 50-amino-acid chain: Putative protein HokG (50 aa).

Residues 5 to 25 (YALVAIIVLCCTVLGFTLMVG) traverse the membrane as a helical segment.

It belongs to the Hok/Gef family.

Its subcellular location is the cell inner membrane. Toxic component of a type I toxin-antitoxin (TA) system. When overexpressed kills cells within minutes; causes collapse of the transmembrane potential and arrest of respiration. Its toxic effect is probably neutralized by an antisense antitoxin Sok RNA. This is Putative protein HokG (hokG) from Escherichia coli O157:H7.